The primary structure comprises 387 residues: tRNA pseudouridine synthase B (387 aa).

Aspartate 43 serves as the catalytic Nucleophile.

This sequence belongs to the pseudouridine synthase TruB family. Type 1 subfamily.

It carries out the reaction uridine(55) in tRNA = pseudouridine(55) in tRNA. Responsible for synthesis of pseudouridine from uracil-55 in the psi GC loop of transfer RNAs. The sequence is that of tRNA pseudouridine synthase B from Bifidobacterium longum (strain DJO10A).